The sequence spans 424 residues: Chloroquine resistance transporter (424 aa).

A compositionally biased stretch (basic residues) spans Met1 to Gly10. The interval Met1 to Glu32 is disordered. Residues Met1–Asn57 are Cytoplasmic-facing. Residues Pro16 to Asn29 are compositionally biased toward basic and acidic residues. A helical membrane pass occupies residues Ile58–Ala78. Over Lys79 to Ser89 the chain is Vacuolar. An N-linked (GlcNAc...) asparagine glycan is attached at Asn87. The helical transmembrane segment at Phe90 to Met110 threads the bilayer. Over Phe111–Asn124 the chain is Cytoplasmic. The chain crosses the membrane as a helical span at residues Phe125–Ile145. Over Gly146 to Asn153 the chain is Vacuolar. Residues Ile154–Leu174 form a helical membrane-spanning segment. The Cytoplasmic portion of the chain corresponds to Arg175 to His179. A helical transmembrane segment spans residues Leu180–Leu200. Topologically, residues Ser201–Asn208 are vacuolar. The helical transmembrane segment at Ser209–Thr229 threads the bilayer. Residues Arg230–Ala246 are Cytoplasmic-facing. The helical transmembrane segment at Val247–Phe267 threads the bilayer. Topologically, residues Leu268–Lys316 are vacuolar. Disulfide bonds link Cys288–Cys311 and Cys300–Cys308. Residues Thr317–Glu337 traverse the membrane as a helical segment. At Lys338–Thr345 the chain is on the cytoplasmic side. Residues Ile346–Gly366 traverse the membrane as a helical segment. The Vacuolar portion of the chain corresponds to Asp367–Asp376. A helical membrane pass occupies residues Phe377–Leu397. Residues Glu398–His424 lie on the Cytoplasmic side of the membrane.

The protein belongs to the CRT-like transporter family.

It localises to the vacuole membrane. In terms of biological role, nutrient transporter. Involved in maintaining the osmotic homeostasis of the digestive vacuole. This Plasmodium vivax (strain Salvador I) protein is Chloroquine resistance transporter.